Here is a 230-residue protein sequence, read N- to C-terminus: Cell division ATP-binding protein FtsE (230 aa).

Positions 3 to 228 (ITLDHVTKQY…RDEQRGVYGM (226 aa)) constitute an ABC transporter domain. Residue 37–44 (GPSGSGKS) participates in ATP binding.

It belongs to the ABC transporter superfamily. In terms of assembly, homodimer. Forms a membrane-associated complex with FtsX.

It is found in the cell membrane. In terms of biological role, part of the ABC transporter FtsEX involved in cellular division. Has ATPase activity. This chain is Cell division ATP-binding protein FtsE, found in Mycobacterium tuberculosis (strain ATCC 25618 / H37Rv).